The chain runs to 156 residues: Endogenous retrovirus group K member 104 Pro protein (156 aa).

The Peptidase A2 domain maps to 21-96 (FEGLVDTEAD…IPLNLWGQDL (76 aa)). The active site involves Asp-26. The G-patch domain occupies 111-156 (YSPTSQKIMTKMGYIPGKGLGKNEDGIKVPVEAKINQKREGIGYPF).

Belongs to the peptidase A2 family. HERV class-II K(HML-2) subfamily. Active as a homodimer. Autoproteolytically processed at the N-terminus. Expected C-terminal autoprocessing not detected. The sequence shown is that of the processed Pro protein.

The enzyme catalyses Processing at the authentic HIV-1 PR recognition site and release of the mature p17 matrix and the p24 capsid protein, as a result of the cleavage of the -SQNY-|-PIVQ- cleavage site.. Functionally, retroviral proteases have roles in the processing of the primary translation products and the maturation of the viral particle. Endogenous Pro proteins may have kept, lost or modified their original function during evolution. The protein is Endogenous retrovirus group K member 104 Pro protein (HERV-K104) of Homo sapiens (Human).